A 285-amino-acid chain; its full sequence is Acetylglutamate kinase (285 aa).

Substrate contacts are provided by residues 69–70 (GG), arginine 91, and asparagine 183.

The protein belongs to the acetylglutamate kinase family. ArgB subfamily.

The protein localises to the cytoplasm. The enzyme catalyses N-acetyl-L-glutamate + ATP = N-acetyl-L-glutamyl 5-phosphate + ADP. It functions in the pathway amino-acid biosynthesis; L-arginine biosynthesis; N(2)-acetyl-L-ornithine from L-glutamate: step 2/4. Functionally, catalyzes the ATP-dependent phosphorylation of N-acetyl-L-glutamate. In Jannaschia sp. (strain CCS1), this protein is Acetylglutamate kinase.